The following is a 417-amino-acid chain: UDP-N-acetylglucosamine 1-carboxyvinyltransferase (417 aa).

22–23 (KN) contacts phosphoenolpyruvate. UDP-N-acetyl-alpha-D-glucosamine is bound at residue Arg-92. The active-site Proton donor is the Cys-116. Cys-116 carries the post-translational modification 2-(S-cysteinyl)pyruvic acid O-phosphothioketal. Residues 161-164 (KVSV), Asp-305, and Ile-327 contribute to the UDP-N-acetyl-alpha-D-glucosamine site.

The protein belongs to the EPSP synthase family. MurA subfamily.

The protein resides in the cytoplasm. It catalyses the reaction phosphoenolpyruvate + UDP-N-acetyl-alpha-D-glucosamine = UDP-N-acetyl-3-O-(1-carboxyvinyl)-alpha-D-glucosamine + phosphate. The protein operates within cell wall biogenesis; peptidoglycan biosynthesis. Its function is as follows. Cell wall formation. Adds enolpyruvyl to UDP-N-acetylglucosamine. The sequence is that of UDP-N-acetylglucosamine 1-carboxyvinyltransferase from Pelagibacter ubique (strain HTCC1062).